The primary structure comprises 232 residues: MHLMIPAEYISNVIYEGPRADSLYAADQRLRQLADSVRTTAESLNTTLDELHENWKGSSSEWMADAALRYLDWLSKHSRQILRTARVIESLVMAYEETLLRVVPPATIANNREEVRRLIASNVAGGKHSSNRRPRGTIRAVPGRKYPSNGPLSKLDPICAIEAAPMAGAAADPQERVGPRGRRGLAGQQQCRGRPGPSLRCSHDTPRFQMNQAFHTMVNMLLTCFACQEKPR.

Disordered stretches follow at residues 123-147 and 169-200; these read VAGGKHSSNRRPRGTIRAVPGRKYP and AAADPQERVGPRGRRGLAGQQQCRGRPGPSLR.

This sequence belongs to the mycobacterial PPE family.

This is an uncharacterized protein from Mycobacterium tuberculosis (strain ATCC 25618 / H37Rv).